The chain runs to 146 residues: Large ribosomal subunit protein uL11 (146 aa).

This sequence belongs to the universal ribosomal protein uL11 family. As to quaternary structure, part of the ribosomal stalk of the 50S ribosomal subunit. Interacts with L10 and the large rRNA to form the base of the stalk. L10 forms an elongated spine to which L12 dimers bind in a sequential fashion forming a multimeric L10(L12)X complex. Post-translationally, one or more lysine residues are methylated.

Its function is as follows. Forms part of the ribosomal stalk which helps the ribosome interact with GTP-bound translation factors. This chain is Large ribosomal subunit protein uL11, found in Blochmanniella floridana.